The primary structure comprises 98 residues: MSANQVKLTPKDILEKEFKVSMRGYNQDEVDQFLDIVIKDYEAFQQELDELRQENARLKRQVEELQKRPTTPTGTTNYDILQRLSNLEKHVFGRKLYE.

Positions 34–71 (LDIVIKDYEAFQQELDELRQENARLKRQVEELQKRPTT) form a coiled coil.

This sequence belongs to the GpsB family. As to quaternary structure, forms polymers through the coiled coil domains. Interacts with PBP1, MreC and EzrA.

It localises to the cytoplasm. In terms of biological role, divisome component that associates with the complex late in its assembly, after the Z-ring is formed, and is dependent on DivIC and PBP2B for its recruitment to the divisome. Together with EzrA, is a key component of the system that regulates PBP1 localization during cell cycle progression. Its main role could be the removal of PBP1 from the cell pole after pole maturation is completed. Also contributes to the recruitment of PBP1 to the division complex. Not essential for septum formation. This chain is Cell cycle protein GpsB, found in Geobacillus thermodenitrificans (strain NG80-2).